The chain runs to 432 residues: FAD-dependent monooxygenase pynG (432 aa).

The FAD site is built by E32, R103, D315, and A328.

This sequence belongs to the paxM FAD-dependent monooxygenase family. The cofactor is FAD.

The protein operates within secondary metabolite biosynthesis. Its function is as follows. FAD-dependent monooxygenase; part of the gene cluster that mediates the biosynthesis of pyranonigrins, a family of antioxidative compounds. The first step of pyranonigrins biosynthesis is performed by the hybrid PKS-NRPS synthetase that condenses 6 malonyl-CoA units to an acetyl starter unit, to form a 1,3,5-trioxotetradecane-6,8-dienyl-ACP. The enoyl reductase (ER) domain of pynA is likely to be functional during the first two rounds of polyketide chain extension, to generate the saturated C-C bonds of the alkyl side chain. PynA subsequently forms the amide bond between the acyl chain and L-serine. Although pynA has a terminal reductase domain, it appears to require the thioesterase pynI for the release of the straight-chain intermediate from pynA via the formation of a tetramic acid pyranonigrin J. The methyltransferase pynC then coverts pyranonigrin J to pyranonigrin I via N-methylation. The FAD-dependent monooxygenase pynG catalyzes an epoxidation-mediated cyclization to form the dihydro-gamma-pyrone moiety, followed by pynD-catalyzed oxidation of the alcohol to the ketone and enolization to yield the characteristic tetramic acid-fused gamma-pyrone core of pyranonigrin H. Pyranonigrin H is substrate of pynH for dehydration-mediated exo-methylene formation from the serine side chain to produce pyranonigrin E, before the oxidase pynE reduces the exo-methylene of pyranonigrin E into a pendant methyl to form pyranonigrin G. The FAD-linked oxidoreductase pynB performs the reverse reaction and converts pyranonigrin G back to pyranonigrin E. The sequence is that of FAD-dependent monooxygenase pynG from Aspergillus niger (strain ATCC MYA-4892 / CBS 513.88 / FGSC A1513).